The sequence spans 270 residues: Phosphatidylglycerol--prolipoprotein diacylglyceryl transferase (270 aa).

The next 7 helical transmembrane spans lie at 10–30, 56–76, 92–112, 120–140, 175–195, 202–222, and 237–257; these read VAVA…LVGI, LIFW…VLFY, WKGG…AWWF, FFQL…AGRI, SQLY…NLYA, MAVS…VEFV, and VTMG…LIWL. Position 139 (Arg139) interacts with a 1,2-diacyl-sn-glycero-3-phospho-(1'-sn-glycerol).

Belongs to the Lgt family.

It is found in the cell inner membrane. It carries out the reaction L-cysteinyl-[prolipoprotein] + a 1,2-diacyl-sn-glycero-3-phospho-(1'-sn-glycerol) = an S-1,2-diacyl-sn-glyceryl-L-cysteinyl-[prolipoprotein] + sn-glycerol 1-phosphate + H(+). Its pathway is protein modification; lipoprotein biosynthesis (diacylglyceryl transfer). Its function is as follows. Catalyzes the transfer of the diacylglyceryl group from phosphatidylglycerol to the sulfhydryl group of the N-terminal cysteine of a prolipoprotein, the first step in the formation of mature lipoproteins. The polypeptide is Phosphatidylglycerol--prolipoprotein diacylglyceryl transferase (Pseudomonas syringae pv. syringae (strain B728a)).